Reading from the N-terminus, the 459-residue chain is N-chimaerin (459 aa).

Ala-2 carries the post-translational modification N-acetylalanine. Residues 49-135 form the SH2 domain; it reads EYHGMISREE…IETKAAEYIA (87 aa). Position 192 is a phosphothreonine (Thr-192). Residues 205–255 form a Phorbol-ester/DAG-type zinc finger; the sequence is VHNFKVHTFRGPHWCEYCANFMWGLIAQGVKCADCGLNVHKQCSKMVPNDC. Residues 268–459 form the Rho-GAP domain; that stretch reads CDLTTLVKAH…LLIKNEDILF (192 aa). A Phosphothreonine modification is found at Thr-340.

In terms of assembly, interacts with EPHA4; effector of EPHA4 in axon guidance linking EPHA4 activation to RAC1 regulation. May also interact with EPHB1 and EPHB2. In terms of processing, phosphorylated. Phosphorylation is EPHA4 kinase activity-dependent.

Its function is as follows. GTPase-activating protein for p21-rac and a phorbol ester receptor. May play an important role in neuronal signal-transduction mechanisms. Involved in the assembly of neuronal locomotor circuits as a direct effector of EPHA4 in axon guidance. This Mus musculus (Mouse) protein is N-chimaerin (Chn1).